The sequence spans 898 residues: Histone-lysine N-methyltransferase mes-4 (898 aa).

The disordered stretch occupies residues Met1–Asp68. The segment covering Gln36–Asn51 has biased composition (polar residues). 2 PHD-type zinc fingers span residues Asp126–Asp214 and Ile303–Gly355. The region spanning Glu537–Asn665 is the SET domain. Positions Asn671–Gly687 constitute a Post-SET domain. The segment at Ala689–Lys847 is disordered. Basic and acidic residues predominate over residues Glu692–Ala704. A compositionally biased stretch (basic residues) spans Lys705–Asn719. Low complexity-rich tracts occupy residues Ile737–Ser751 and Ser761–Gln773. The span at Pro774–Leu788 shows a compositional bias: polar residues. A compositionally biased stretch (low complexity) spans Ser802–Ser811.

This sequence belongs to the class V-like SAM-binding methyltransferase superfamily. Histone-lysine methyltransferase family. SET2 subfamily. In terms of tissue distribution, in adults, it is predominantly expressed in the germline, and weakly expressed in intestinal cells.

It localises to the nucleus. The protein localises to the chromosome. It catalyses the reaction L-lysyl(36)-[histone H3] + 2 S-adenosyl-L-methionine = N(6),N(6)-dimethyl-L-lysyl(36)-[histone H3] + 2 S-adenosyl-L-homocysteine + 2 H(+). Histone methyltransferase. Dimethylates 'Lys-36' of histone H3, a specific tag for epigenetic transcriptional activation. Plays a central role in early development and is responsible for all H3 'Lys-36' dimethylation until about the 40-cell stage. Indirectly involved in the global inactivation of the X chromosomes in germline cells, possibly by excluding the mes-2-mes-3-mes-6 repressive Polycomb complex from the autosomes. Not related to transcription elongation. Required for small-RNA-induced H3K27 trimethylation. May suppress sensitivity to RNAi. May regulate the expression of genes required for vulval development. The chain is Histone-lysine N-methyltransferase mes-4 from Caenorhabditis elegans.